We begin with the raw amino-acid sequence, 434 residues long: Transcriptional enhancer factor TEF-3 (434 aa).

Polar residues predominate over residues 1-28 (MEGTAGTITSNEWSSPTSPEGSTASGGS). 2 disordered regions span residues 1-42 (MEGT…AEGV) and 188-215 (QPPL…PPWQ). Residues 36-112 (DNDAEGVWSP…QVLARRKARE (77 aa)) constitute a DNA-binding region (TEA). Residues 201 to 213 (GPAPSPSAPPAPP) show a composition bias toward pro residues.

Interacts with YAP1 and WWTR1/TAZ. As to expression, preferentially expressed in skeletal muscle. Lower levels in pancreas, placenta, and heart.

It localises to the nucleus. Functionally, transcription factor which plays a key role in the Hippo signaling pathway, a pathway involved in organ size control and tumor suppression by restricting proliferation and promoting apoptosis. The core of this pathway is composed of a kinase cascade wherein MST1/MST2, in complex with its regulatory protein SAV1, phosphorylates and activates LATS1/2 in complex with its regulatory protein MOB1, which in turn phosphorylates and inactivates YAP1 oncoprotein and WWTR1/TAZ. Acts by mediating gene expression of YAP1 and WWTR1/TAZ, thereby regulating cell proliferation, migration and epithelial mesenchymal transition (EMT) induction. Binds specifically and non-cooperatively to the Sph and GT-IIC 'enhansons' (5'-GTGGAATGT-3') and activates transcription. Binds to the M-CAT motif. This Homo sapiens (Human) protein is Transcriptional enhancer factor TEF-3 (TEAD4).